We begin with the raw amino-acid sequence, 304 residues long: uncharacterized protein (304 aa).

The protein belongs to the mimivirus L137 family.

This is an uncharacterized protein from Acanthamoeba polyphaga mimivirus (APMV).